The chain runs to 787 residues: MNSKVLNTLEYQQVKQQLAPYLVSATGQQALNELHPMTSVADIQRALDETNDGAEVYRLKGGIPVARLADIKPHMKRLAIGATLNGSELGQVGRVLRTTRAITRFFAELLEDAPENDIRHLFDEVAELVTLPDVTKRLATAIEGDGHITDEASPELSRIRSNIRRTETEIRNQMGHYTRGHDAKYLSDPIITIRNDRYVIPVKAENRSRFGGIVHDQSASGQTLFIEPQAVMAMNDRLRQNQVAEKQEEQRILEELSNLIAPYQDEIINNAAILGHFDFINAKARYAHDMKATEPAVSPQNEVYLRQARHPLIDPRKVVANDISLGTDYQAMVITGPNTGGKTITLKTLGLLQLMAQSGLFIPVEAGSRVGVYNEIFADIGDEQSIEQNLSTFSSHMENIESFLAQIDAHSLVLVDELGAGTDPQEGAALAIAILDAIGAKGTQVVATTHYPELKAYGFNRPDTINASMEFDEETLKPTYRLLVGIPGRSNALDIAQRLGIPQAIVDQARSLTDTDSQDLNAMIADLVTKRKQVEDEQLHLKTQVADSEKLHRQLKSEFNAYQQRKDQLIEDAKVQANTIVEQSKTKADAIISDLRKKQLASGTATVKENELIDAKGALNALEQQPKLKKNRVLRRAKAQHDFHEGDDVLVKSYGQRGVLMRQMGKHEWEVQLGILKMKISDGDLERVKPEEPKRARATVQSAHASHVSPNLDLRGVRYEDAMTQVDRYIDAALLAGYPSVTIVHGKGTGALREGITNYLKSNRQVKSFHFAAPNHGGNGATEVQFK.

Residue 336–343 coordinates ATP; it reads GPNTGGKT. Residues 712 to 787 enclose the Smr domain; that stretch reads LDLRGVRYED…GNGATEVQFK (76 aa).

Belongs to the DNA mismatch repair MutS family. MutS2 subfamily. In terms of assembly, homodimer. Binds to stalled ribosomes, contacting rRNA.

Functionally, endonuclease that is involved in the suppression of homologous recombination and thus may have a key role in the control of bacterial genetic diversity. Its function is as follows. Acts as a ribosome collision sensor, splitting the ribosome into its 2 subunits. Detects stalled/collided 70S ribosomes which it binds and splits by an ATP-hydrolysis driven conformational change. Acts upstream of the ribosome quality control system (RQC), a ribosome-associated complex that mediates the extraction of incompletely synthesized nascent chains from stalled ribosomes and their subsequent degradation. Probably generates substrates for RQC. This Lactiplantibacillus plantarum (strain ATCC BAA-793 / NCIMB 8826 / WCFS1) (Lactobacillus plantarum) protein is Endonuclease MutS2.